Here is a 346-residue protein sequence, read N- to C-terminus: Homeobox protein ceh-22 (346 aa).

Disordered stretches follow at residues 1–68 (MFNV…QSAL) and 135–190 (LPDQ…RKKR). The segment covering 9-24 (AATPSIASVSSVASPS) has biased composition (low complexity). The span at 25 to 44 (EQHGLSTSVGVGVNDTTSRT) shows a compositional bias: polar residues. Residues 49-67 (AASSASSASAAPQQQSQSA) show a composition bias toward low complexity. Residues 147–156 (LDNSNTSNGN) are compositionally biased toward polar residues. A compositionally biased stretch (acidic residues) spans 166–182 (EDEDEILEDEENDEEDD). Positions 189-248 (KRKRRVLFTKAQTYELERRFRSQKYLSAPEREALAMQIRLTPTQVKIWFQNHRYKTKKSH) form a DNA-binding region, homeobox.

The protein belongs to the NK-2 homeobox family.

It localises to the nucleus. Its function is as follows. Involved in combinatorial activation of gene expression in pharyngeal muscle. Specifically binds a site necessary for activity of the B subelement of myo-2 enhancer. Regulates distal tip cell fate. The polypeptide is Homeobox protein ceh-22 (ceh-22) (Caenorhabditis elegans).